Consider the following 370-residue polypeptide: 3-isopropylmalate dehydrogenase 2 (370 aa).

77 to 90 (GPKWDAVPYEVRPE) contacts NAD(+). Residues R97, R107, R135, and D226 each contribute to the substrate site. The Mg(2+) site is built by D226, D250, and D254. NAD(+) is bound at residue 290–302 (GSAPDIAGKGLAN).

This sequence belongs to the isocitrate and isopropylmalate dehydrogenases family. LeuB type 1 subfamily. As to quaternary structure, homodimer. Requires Mg(2+) as cofactor. Mn(2+) is required as a cofactor.

It localises to the cytoplasm. It carries out the reaction (2R,3S)-3-isopropylmalate + NAD(+) = 4-methyl-2-oxopentanoate + CO2 + NADH. Its pathway is amino-acid biosynthesis; L-leucine biosynthesis; L-leucine from 3-methyl-2-oxobutanoate: step 3/4. In terms of biological role, catalyzes the oxidation of 3-carboxy-2-hydroxy-4-methylpentanoate (3-isopropylmalate) to 3-carboxy-4-methyl-2-oxopentanoate. The product decarboxylates to 4-methyl-2 oxopentanoate. This chain is 3-isopropylmalate dehydrogenase 2, found in Bradyrhizobium diazoefficiens (strain JCM 10833 / BCRC 13528 / IAM 13628 / NBRC 14792 / USDA 110).